A 2272-amino-acid polypeptide reads, in one-letter code: COPII coat assembly protein SEC16 (2272 aa).

Positions 1–20 (MSTEAKRRRNQKKKQKQKQK) are enriched in basic residues. 11 disordered regions span residues 1–99 (MSTE…SPYV), 124–401 (AVDV…HTPE), 430–630 (VSSQ…HNLS), 646–714 (QQFL…EKKK), 727–785 (SKPK…NPYQ), 832–852 (EGAASGSQSQHPFPPQPLGAY), 1488–1624 (LNHG…PKRA), 1694–1737 (QDRR…YRKT), 1750–1990 (SLAP…EHAV), 2043–2125 (RASS…KPIK), and 2146–2187 (KDAT…VGGP). Over residues 151–170 (ATPAEPSAAPVAPEAAASEE) the composition is skewed to low complexity. Basic and acidic residues-rich tracts occupy residues 215-237 (PEQRPEMTEERPELPTFEEERTQ) and 318-339 (EENRSRMEEHKESISGDERDQD). The span at 481–496 (AQNTNPNVDTSQQLPV) shows a compositional bias: polar residues. Residues 497–509 (SRSSAELSSSQAA) are compositionally biased toward low complexity. Positions 559 to 598 (DNDDDLLNDDEEEEANAGDQPENDQENCDDDSFLDSDEEP) are enriched in acidic residues. Polar residues predominate over residues 608–621 (TTYTPSTQVLGQDR). Over residues 703-714 (ESVRRLEEEKKK) the composition is skewed to basic and acidic residues. Residues 748–758 (QPASRSFSPSD) show a composition bias toward polar residues. Polar residues-rich tracts occupy residues 1526–1554 (PGSNVFSVSRSNNHPHGTEHGNSMSNLHG), 1582–1609 (PQNSHLPNQQSNLPSPANGHSRNPSIPS), and 1699–1719 (SAYSASSQGILPSSRRSSNIS). Residues 1750-1761 (SLAPSSVSLSQS) show a composition bias toward low complexity. The segment covering 1798–1815 (SVDTSEYSFPDESVQSWE) has biased composition (polar residues). The span at 1972–1990 (EEGRTDNQTKAVEKQEHAV) shows a compositional bias: basic and acidic residues. Residues 2061-2076 (YYDDVVEDESDDSEEE) are compositionally biased toward acidic residues. Composition is skewed to basic and acidic residues over residues 2077 to 2103 (SERKRQEKEKEEERKREAAEKEKRKNE), 2114 to 2123 (LKKDTNEKKP), and 2146 to 2155 (KDATEEEKQK).

Belongs to the SEC16 family.

The protein localises to the endoplasmic reticulum membrane. Its function is as follows. Involved in the initiation of assembly of the COPII coat required for the formation of transport vesicles from the endoplasmic reticulum (ER) and the selection of cargo molecules. Also involved in autophagy. This is COPII coat assembly protein SEC16 (SEC16) from Eremothecium gossypii (strain ATCC 10895 / CBS 109.51 / FGSC 9923 / NRRL Y-1056) (Yeast).